The primary structure comprises 102 residues: Large ribosomal subunit protein bL21 (102 aa).

The protein belongs to the bacterial ribosomal protein bL21 family. As to quaternary structure, part of the 50S ribosomal subunit. Contacts protein L20.

Functionally, this protein binds to 23S rRNA in the presence of protein L20. This chain is Large ribosomal subunit protein bL21, found in Leptospira biflexa serovar Patoc (strain Patoc 1 / Ames).